The sequence spans 218 residues: Pyridoxine/pyridoxamine 5'-phosphate oxidase (218 aa).

Residues 12–15 (RLAY) and Arg70 contribute to the substrate site. Residues 65–70 (RTVLLR), 80–81 (YT), Lys87, and Gln109 each bind FMN. Residues Tyr127, Arg131, and Ser135 each contribute to the substrate site. FMN is bound by residues 145-146 (QS) and Trp191. 197 to 199 (RLH) provides a ligand contact to substrate. Residue Arg201 coordinates FMN.

The protein belongs to the pyridoxamine 5'-phosphate oxidase family. As to quaternary structure, homodimer. It depends on FMN as a cofactor.

It carries out the reaction pyridoxamine 5'-phosphate + O2 + H2O = pyridoxal 5'-phosphate + H2O2 + NH4(+). The catalysed reaction is pyridoxine 5'-phosphate + O2 = pyridoxal 5'-phosphate + H2O2. The protein operates within cofactor metabolism; pyridoxal 5'-phosphate salvage; pyridoxal 5'-phosphate from pyridoxamine 5'-phosphate: step 1/1. Its pathway is cofactor metabolism; pyridoxal 5'-phosphate salvage; pyridoxal 5'-phosphate from pyridoxine 5'-phosphate: step 1/1. Its function is as follows. Catalyzes the oxidation of either pyridoxine 5'-phosphate (PNP) or pyridoxamine 5'-phosphate (PMP) into pyridoxal 5'-phosphate (PLP). The chain is Pyridoxine/pyridoxamine 5'-phosphate oxidase from Deinococcus geothermalis (strain DSM 11300 / CIP 105573 / AG-3a).